A 360-amino-acid polypeptide reads, in one-letter code: Nicotinate-nucleotide--dimethylbenzimidazole phosphoribosyltransferase (360 aa).

E327 serves as the catalytic Proton acceptor.

The protein belongs to the CobT family.

The catalysed reaction is 5,6-dimethylbenzimidazole + nicotinate beta-D-ribonucleotide = alpha-ribazole 5'-phosphate + nicotinate + H(+). Its pathway is nucleoside biosynthesis; alpha-ribazole biosynthesis; alpha-ribazole from 5,6-dimethylbenzimidazole: step 1/2. Functionally, catalyzes the synthesis of alpha-ribazole-5'-phosphate from nicotinate mononucleotide (NAMN) and 5,6-dimethylbenzimidazole (DMB). The sequence is that of Nicotinate-nucleotide--dimethylbenzimidazole phosphoribosyltransferase from Shewanella baltica (strain OS155 / ATCC BAA-1091).